Reading from the N-terminus, the 65-residue chain is MQFKEVKAKSVEELHKLVNDLKAELWTLEFRNSTGSLEQTHKIPQLRKDIARALTALKQKEMETK.

The protein belongs to the universal ribosomal protein uL29 family.

This chain is Large ribosomal subunit protein uL29, found in Mycoplasmopsis synoviae (strain 53) (Mycoplasma synoviae).